Here is a 177-residue protein sequence, read N- to C-terminus: Ribosome maturation factor RimP (177 aa).

The protein belongs to the RimP family.

Its subcellular location is the cytoplasm. Required for maturation of 30S ribosomal subunits. This is Ribosome maturation factor RimP from Streptococcus sanguinis (strain SK36).